A 274-amino-acid polypeptide reads, in one-letter code: Large ribosomal subunit protein uL2cz/uL2cy (274 aa).

Disordered stretches follow at residues 1-21 (MAIH…VDSQ) and 224-274 (NPVD…RRSK).

This sequence belongs to the universal ribosomal protein uL2 family. In terms of assembly, part of the 50S ribosomal subunit.

The protein localises to the plastid. Its subcellular location is the chloroplast. This is Large ribosomal subunit protein uL2cz/uL2cy (rpl2-A) from Populus trichocarpa (Western balsam poplar).